Consider the following 540-residue polypeptide: Amino acid transporter AVT1B (540 aa).

Residues 1–11 (MNHSTSDQSLY) show a composition bias toward polar residues. The disordered stretch occupies residues 1–55 (MNHSTSDQSLYIESDDGDDERKHLSDDEDDDGTLSDTSDAYNQNQHHLSKASPYS). 11 consecutive transmembrane segments (helical) span residues 155–175 (AVLN…PYAV), 180–200 (WLGL…GLLL), 227–247 (ILVS…YIIL), 273–293 (LFAL…DLSV), 297–317 (ISAG…WVGL), 332–352 (LATL…HGVF), 367–387 (AVLL…AVMG), 412–432 (IALW…LSPV), 452–474 (IAIR…FFGL), 478–500 (LIGS…LSIL), and 511–531 (ICIL…YSAL).

Belongs to the amino acid/polyamine transporter 2 family. Amino acid/auxin permease (AAAP) (TC 2.A.18.5) subfamily.

The protein localises to the membrane. In Arabidopsis thaliana (Mouse-ear cress), this protein is Amino acid transporter AVT1B.